We begin with the raw amino-acid sequence, 42 residues long: Photosystem I reaction center subunit IX (42 aa).

Residues 7–27 (YLSVAPVLSTLWFVALAGLLI) form a helical membrane-spanning segment.

It belongs to the PsaJ family.

It is found in the plastid. The protein resides in the chloroplast thylakoid membrane. Its function is as follows. May help in the organization of the PsaE and PsaF subunits. In Atropa belladonna (Belladonna), this protein is Photosystem I reaction center subunit IX.